The following is a 31-amino-acid chain: Electron transfer flavoprotein-ubiquinone oxidoreductase (31 aa).

11–25 (VVIVGAGGAGLSAAI) provides a ligand contact to FAD.

Monomer. [4Fe-4S] cluster is required as a cofactor. The cofactor is FAD.

The enzyme catalyses a ubiquinone + reduced [electron-transfer flavoprotein] = a ubiquinol + oxidized [electron-transfer flavoprotein] + H(+). In terms of biological role, accepts electrons from ETF and reduces ubiquinone. This is Electron transfer flavoprotein-ubiquinone oxidoreductase from Paracoccus denitrificans.